Consider the following 223-residue polypeptide: DNA mismatch repair protein MutH (223 aa).

Belongs to the MutH family.

The protein resides in the cytoplasm. Functionally, sequence-specific endonuclease that cleaves unmethylated GATC sequences. It is involved in DNA mismatch repair. The sequence is that of DNA mismatch repair protein MutH from Haemophilus influenzae (strain PittGG).